The primary structure comprises 878 residues: MutS protein homolog 4 (878 aa).

The segment at 22–41 (NSSNSISKPSTKKSIRNQKS) is disordered. 634 to 641 (GCNMSGKS) is a binding site for ATP.

The protein belongs to the DNA mismatch repair MutS family. As to quaternary structure, heterooligomer of MSH4 and MSH5.

In terms of biological role, involved in meiotic recombination. Facilitate crossovers between homologs during meiosis. The sequence is that of MutS protein homolog 4 (MSH4) from Saccharomyces cerevisiae (strain ATCC 204508 / S288c) (Baker's yeast).